A 324-amino-acid polypeptide reads, in one-letter code: MTAHLKKAELHCHIEGATPPELAVRQARKYGVDTGTIIRDGAYVWEDFTSFVKCYDAVASLFRTEGDYALLAEAYLTELAEAGTIYSEIIVSPDHGNTVGLGADAYLEGLAAGMEAAKARKGIESRMLITGIRHLGPEAVVRTAEYAASHRHPLVTGFNLAGEERMHSVAEFSRAFDIVRDAGLGLTIHAGELSGAFSVRDALDHVRPARISHGVRAIEDTDLVRRLADEGVVLEVCPGSNIALKVFPDFPSHPLRRLYDAGVRVTLNSDDPPFFHTSLAQEYEIAAHAMGFSDGEIDRMTRTALEAAFVDEPTRERLLAALHI.

3 residues coordinate Zn(2+): histidine 11, histidine 13, and histidine 189. Glutamate 192 serves as the catalytic Proton donor. Aspartate 270 serves as a coordination point for Zn(2+). Aspartate 271 is a substrate binding site.

The protein belongs to the metallo-dependent hydrolases superfamily. Adenosine and AMP deaminases family. Adenine deaminase type 2 subfamily. The cofactor is Zn(2+).

It catalyses the reaction adenine + H2O + H(+) = hypoxanthine + NH4(+). Functionally, catalyzes the hydrolytic deamination of adenine to hypoxanthine. Plays an important role in the purine salvage pathway and in nitrogen catabolism. This is Adenine deaminase from Sinorhizobium medicae (strain WSM419) (Ensifer medicae).